We begin with the raw amino-acid sequence, 339 residues long: tRNA N6-adenosine threonylcarbamoyltransferase (339 aa).

Residues histidine 114 and histidine 118 each coordinate Fe cation. Substrate is bound by residues 137–141, aspartate 170, glycine 183, aspartate 187, and asparagine 277; that span reads VVSGG. Residue aspartate 305 coordinates Fe cation.

This sequence belongs to the KAE1 / TsaD family. Requires Fe(2+) as cofactor.

The protein resides in the cytoplasm. It carries out the reaction L-threonylcarbamoyladenylate + adenosine(37) in tRNA = N(6)-L-threonylcarbamoyladenosine(37) in tRNA + AMP + H(+). Its function is as follows. Required for the formation of a threonylcarbamoyl group on adenosine at position 37 (t(6)A37) in tRNAs that read codons beginning with adenine. Is involved in the transfer of the threonylcarbamoyl moiety of threonylcarbamoyl-AMP (TC-AMP) to the N6 group of A37, together with TsaE and TsaB. TsaD likely plays a direct catalytic role in this reaction. The chain is tRNA N6-adenosine threonylcarbamoyltransferase from Clostridium perfringens (strain ATCC 13124 / DSM 756 / JCM 1290 / NCIMB 6125 / NCTC 8237 / Type A).